Consider the following 337-residue polypeptide: tRNA N6-adenosine threonylcarbamoyltransferase (337 aa).

The Fe cation site is built by H111 and H115. Substrate-binding positions include 134-138 (LVSGG), D167, G180, and N272. D300 is a binding site for Fe cation.

It belongs to the KAE1 / TsaD family. Requires Fe(2+) as cofactor.

The protein resides in the cytoplasm. It catalyses the reaction L-threonylcarbamoyladenylate + adenosine(37) in tRNA = N(6)-L-threonylcarbamoyladenosine(37) in tRNA + AMP + H(+). Required for the formation of a threonylcarbamoyl group on adenosine at position 37 (t(6)A37) in tRNAs that read codons beginning with adenine. Is involved in the transfer of the threonylcarbamoyl moiety of threonylcarbamoyl-AMP (TC-AMP) to the N6 group of A37, together with TsaE and TsaB. TsaD likely plays a direct catalytic role in this reaction. In Aeromonas hydrophila subsp. hydrophila (strain ATCC 7966 / DSM 30187 / BCRC 13018 / CCUG 14551 / JCM 1027 / KCTC 2358 / NCIMB 9240 / NCTC 8049), this protein is tRNA N6-adenosine threonylcarbamoyltransferase.